Here is a 167-residue protein sequence, read N- to C-terminus: E1B protein, small T-antigen (167 aa).

A disordered region spans residues 143–167; sequence GLDPVQEEEEEEENLRAGLDPSTEL.

The protein belongs to the adenoviridae E1B 19 kDa protein family.

It localises to the host cell membrane. Its subcellular location is the host nucleus envelope. The protein localises to the host nucleus lamina. Functionally, putative adenovirus Bcl-2 homolog that inhibits apoptosis induced by TNF or FAS pathways, as well as p53-mediated apoptosis. Without E1B 19K function, virus production is compromised because of premature death of host cell. Interacts with Bax protein in cell lysates. The protein is E1B protein, small T-antigen of Human adenovirus F serotype 40 (HAdV-40).